The sequence spans 213 residues: Methylthioribulose-1-phosphate dehydratase (213 aa).

2 residues coordinate Zn(2+): histidine 104 and histidine 106.

Belongs to the aldolase class II family. MtnB subfamily. It depends on Zn(2+) as a cofactor.

The enzyme catalyses 5-(methylsulfanyl)-D-ribulose 1-phosphate = 5-methylsulfanyl-2,3-dioxopentyl phosphate + H2O. It participates in amino-acid biosynthesis; L-methionine biosynthesis via salvage pathway; L-methionine from S-methyl-5-thio-alpha-D-ribose 1-phosphate: step 2/6. In terms of biological role, catalyzes the dehydration of methylthioribulose-1-phosphate (MTRu-1-P) into 2,3-diketo-5-methylthiopentyl-1-phosphate (DK-MTP-1-P). The sequence is that of Methylthioribulose-1-phosphate dehydratase from Stenotrophomonas maltophilia (strain K279a).